We begin with the raw amino-acid sequence, 138 residues long: ATP synthase epsilon chain (138 aa).

This sequence belongs to the ATPase epsilon chain family. In terms of assembly, F-type ATPases have 2 components, CF(1) - the catalytic core - and CF(0) - the membrane proton channel. CF(1) has five subunits: alpha(3), beta(3), gamma(1), delta(1), epsilon(1). CF(0) has three main subunits: a, b and c.

It localises to the cell inner membrane. Its function is as follows. Produces ATP from ADP in the presence of a proton gradient across the membrane. The polypeptide is ATP synthase epsilon chain (Cupriavidus pinatubonensis (strain JMP 134 / LMG 1197) (Cupriavidus necator (strain JMP 134))).